Consider the following 187-residue polypeptide: uncharacterized protein (187 aa).

A compositionally biased stretch (basic and acidic residues) spans 139-168; that stretch reads ESKDRKALKNAARKAEKNAHEESSYFRVDD. The disordered stretch occupies residues 139 to 172; that stretch reads ESKDRKALKNAARKAEKNAHEESSYFRVDDPEPE.

This is an uncharacterized protein from Caenorhabditis elegans.